The sequence spans 431 residues: Glutamate-1-semialdehyde 2,1-aminomutase (431 aa).

Lys-269 is subject to N6-(pyridoxal phosphate)lysine.

This sequence belongs to the class-III pyridoxal-phosphate-dependent aminotransferase family. HemL subfamily. As to quaternary structure, homodimer. Requires pyridoxal 5'-phosphate as cofactor.

The protein resides in the cytoplasm. It catalyses the reaction (S)-4-amino-5-oxopentanoate = 5-aminolevulinate. The protein operates within porphyrin-containing compound metabolism; protoporphyrin-IX biosynthesis; 5-aminolevulinate from L-glutamyl-tRNA(Glu): step 2/2. It participates in porphyrin-containing compound metabolism; chlorophyll biosynthesis. The protein is Glutamate-1-semialdehyde 2,1-aminomutase of Prosthecochloris aestuarii (strain DSM 271 / SK 413).